A 530-amino-acid chain; its full sequence is MEKSSETNGYLDSAQEGPAAGPGEPGTTARRAGRCAGFLRRHGLVLLTVSGVVAGAGLGAALRGLQLNRTQVTYLAFPGEMLLRMLRMIILPLVVCSLVSGAASLDASSLGRLGGIAIAYFGLTTLGASALAVALAFIIKPGSGSQTLQSSDLGLEDSGPPPVPKETVDSFLDLTRNLFPSNLVVAAFRTYATDYREVTYNTSAGKVTIEKIPIGTEIEGMNILGLVLFALVLGVALKKLGSEGEELIRFFNAFNEATMVLVSWIMWYVPVGIMFLVGSKIVEMKDIIMLVTSLGKYIFTSILGHFIHGGIVLPLIYFVFTRKNPFRFLLGLLTPFATAFATCSSSATLPSMMKCIEENNGVDKRISRFILPIGATVNMDGAAIFQCVAAVFIAQLNNVELRAGQIFTILVTATASSVGAAGVPAGGVLTIAIILEAIGLPTHDLSLILAVDWIVDRTTTVVNVEGDALGAGILHHLNQKAMKRGEQELSEVKVEAIPNSKSEEETSPLVTHPNPTGPAASTPESKESVL.

Met1 is modified (N-acetylmethionine). Polar residues predominate over residues 1-10 (MEKSSETNGY). The tract at residues 1–28 (MEKSSETNGYLDSAQEGPAAGPGEPGTT) is disordered. Residues 1 to 41 (MEKSSETNGYLDSAQEGPAAGPGEPGTTARRAGRCAGFLRR) lie on the Cytoplasmic side of the membrane. Residues 16 to 28 (EGPAAGPGEPGTT) show a composition bias toward low complexity. The next 3 helical transmembrane spans lie at 42–62 (HGLV…GAAL), 88–108 (MIIL…LDAS), and 119–139 (AYFG…AFII). Topologically, residues 140–216 (KPGSGSQTLQ…VTIEKIPIGT (77 aa)) are extracellular. Asn201 carries an N-linked (GlcNAc...) asparagine glycan. 6 consecutive transmembrane segments (helical) span residues 217 to 237 (EIEG…GVAL), 257 to 277 (ATMV…MFLV), 298 to 318 (IFTS…LIYF), 328 to 348 (FLLG…SSAT), 373 to 393 (IGAT…AVFI), and 418 to 438 (VGAA…LEAI). Positions 488–530 (ELSEVKVEAIPNSKSEEETSPLVTHPNPTGPAASTPESKESVL) are disordered. Phosphoserine is present on residues Ser507, Ser525, and Ser528.

The protein belongs to the dicarboxylate/amino acid:cation symporter (DAACS) (TC 2.A.23) family. SLC1A4 subfamily.

The protein localises to the membrane. The protein resides in the melanosome. The enzyme catalyses L-threonine(in) + Na(+)(in) = L-threonine(out) + Na(+)(out). It catalyses the reaction L-serine(in) + Na(+)(in) = L-serine(out) + Na(+)(out). It carries out the reaction L-cysteine(in) + Na(+)(in) = L-cysteine(out) + Na(+)(out). The catalysed reaction is L-alanine(in) + Na(+)(in) = L-alanine(out) + Na(+)(out). The enzyme catalyses L-proline(in) + Na(+)(in) = L-proline(out) + Na(+)(out). It catalyses the reaction 4-hydroxy-L-proline(in) + Na(+)(in) = 4-hydroxy-L-proline(out) + Na(+)(out). Functionally, sodium-dependent neutral amino-acid transporter that mediates transport of alanine, serine, cysteine, proline, hydroxyproline and threonine. This Bos taurus (Bovine) protein is Neutral amino acid transporter A (SLC1A4).